The primary structure comprises 368 residues: MKNNELDVNQFLIRTDLAVETKQAVKDGQAGQKKEINGFIEKERDKGGIKVRTVDITKEGAELSGKKQGRYVTIEAQGVREHDSDMQEKVTEVFAEEFSAYLSALKIPKDASCLIVGLGNWNVTPDALGPLVTENLLVTRHLFRLQPENVQEGYRPVSALAPGVMGLTGIETSDIIQGVIKESKPDFVIAVDALAARAVERVNTTIQFSDTGIHPGSGVGNKRKELSKETLGIPVIAIGVPTVVDAVTIASDTVDYILKHFGREMKDDSPSRSLVPAGMNFGKKKVLTDEDLPGEKERQSFLGIVGTLDENEKRQLIHEVLSPLGHNLMVTPKEIDTFIDDMANVLANGLNTALHEKVSQDNKGSYNH.

Positions 1 to 16 are excised as a propeptide; sequence MKNNELDVNQFLIRTD.

It belongs to the peptidase A25 family. As to quaternary structure, homotetramer. Post-translationally, autoproteolytically processed. The inactive tetrameric zymogen termed p46 autoprocesses to a smaller form termed p41, which is active only during spore germination.

The enzyme catalyses Endopeptidase action with P4 Glu or Asp, P1 preferably Glu &gt; Asp, P1' hydrophobic and P2' Ala.. Functionally, initiates the rapid degradation of small, acid-soluble proteins during spore germination. The sequence is that of Germination protease from Bacillus velezensis (strain DSM 23117 / BGSC 10A6 / LMG 26770 / FZB42) (Bacillus amyloliquefaciens subsp. plantarum).